Consider the following 2531-residue polypeptide: Mediator of RNA polymerase II transcription subunit 12 (2531 aa).

4 disordered regions span residues 1 to 41 (MLSM…VKHG), 204 to 283 (QNHD…GSVM), 584 to 604 (VSRR…PKQD), and 742 to 762 (TTAT…THGF). A compositionally biased stretch (low complexity) spans 210–247 (SSNGTTSGSLTAAGNGPASNGSTGTSSINSVTGSSAST). The segment covering 586-604 (RRREEDQVEPRPPYEPKQD) has biased composition (basic and acidic residues). Threonine 745 bears the Phosphothreonine mark. A phosphoserine mark is found at serine 748 and serine 781. Residues 748–757 (SPPPPAPPPT) show a composition bias toward pro residues. Residues 796 to 805 (EKGQQHEAPD) show a composition bias toward basic and acidic residues. The disordered stretch occupies residues 796–824 (EKGQQHEAPDSPKIGPPGDGETNPGGSIS). Phosphoserine is present on residues serine 806 and serine 1356. Threonine 1360 is subject to Phosphothreonine. Composition is skewed to polar residues over residues 1585-1595 (VSKSDCNSSGS) and 1901-1910 (TPSSVDQSPS). Disordered regions lie at residues 1585–1608 (VSKS…CHSS), 1898–2092 (KADT…NQYA), 2114–2218 (QALS…GMAP), and 2469–2508 (MGGG…QQQT). Over residues 1919–1933 (GRGKGTTTRKRKPKN) the composition is skewed to basic residues. Low complexity-rich tracts occupy residues 1938–2038 (PVVN…QQLN) and 2045–2055 (QPNPQMNFMQQ). Gly residues predominate over residues 2056-2066 (GPGGGGAGPQG). Low complexity-rich tracts occupy residues 2067 to 2080 (MPGQ…APQQ), 2121 to 2132 (RQRQPFQQQAQQ), and 2139 to 2205 (NPMQ…QQQQ). Over residues 2469-2496 (MGGGAGGGMGAGPQQGGGAVGGGAGGGM) the composition is skewed to gly residues. The segment covering 2497–2507 (VPQQQSMNQQQ) has biased composition (low complexity).

The protein belongs to the Mediator complex subunit 12 family. In terms of assembly, component of the Cdk8 module of the Mediator complex, composed of CycC, Cdk8, kto and skd.

It localises to the nucleus. Component of the Mediator complex, a coactivator involved in regulated gene transcription of nearly all RNA polymerase II-dependent genes. Mediator functions as a bridge to convey information from gene-specific regulatory proteins to the basal RNA polymerase II transcription machinery. Mediator is recruited to promoters by direct interactions with regulatory proteins and serves as a scaffold for the assembly of a functional preinitiation complex with RNA polymerase II and the general transcription factors. Required for leg and eye development and macrochaete specification or differentiation. This is Mediator of RNA polymerase II transcription subunit 12 (kto) from Drosophila melanogaster (Fruit fly).